We begin with the raw amino-acid sequence, 563 residues long: Calmodulin-binding protein 60 G (563 aa).

The interval 1 to 76 (MKIRNSPSFH…SSCVSMERSR (76 aa)) is calmodulin-binding. Residues 147–263 (ESWTVEGFNR…VSATRLAERK (117 aa)) are DNA-binding.

The protein belongs to the plant ACBP60 protein family. In terms of assembly, interacts with calmodulin (CaM) in the presence of calcium ions; this interaction is required for defense responses. As to quaternary structure, (Microbial infection) Interacts with V.dahliae SCP41; the interaction is direct and inhibits CBP60G. Expressed in seedlings, roots, leaves, inflorescences and flowers, and, to a lower extent, in siliques. Particularly present in guard cells.

The protein localises to the nucleus. Transcription activator that binds DNA in a sequence-specific manner, 5'-GAAATTTTGG-3', to promote the expression of target genes. Recruited to the promoter of ICS1 and other defense-related genes (e.g. PR1, PR2 and EDS5) in response to both biotic (e.g. Pseudomonas syringae pv. maculicola ES4326, P.syringae pv. tomato DC3000, and microbe-associated molecular patterns (MAMPs) such as flg22) and abiotic stresses (e.g. UV-B, drought and abscisic acid), thus triggering rapid defense responses by stimulating salicylic acid (SA) biosynthesis. Involved in basal and systemic acquired resistance to P.syringae and Hyaloperonospora arabidopsidis. Mediates resistance to drought and sensitivity to abscisic acid (ABA), especially for ABA-mediated signaling process that regulates early seedling growth. The polypeptide is Calmodulin-binding protein 60 G (Arabidopsis thaliana (Mouse-ear cress)).